The chain runs to 392 residues: MMCGFASNQSPKKLSSKKSSATNVHLEISPVKHHPPCKVYENVQGSCLDSAICTTVAKCADLTDDLPVHNKENLLHRLNDLETNSYEEYSALQDSGYSSILQNDSPCQDETDRKVSDIQVRETPKNFMSYQRPFHTLSKINLPILRFEEAVCSTLKKMRKTNKKIDWNAVDVVCGGNYGLEHLIGKSMGLERFDILAELFHRDFKHLLTKILRHLSAMDLINVISVSTTWRKLLQKDNWAYNAYKLGCKELCEKRAKVSSHTATRDESLCRVPLASVQKVAASSLCTSKKQSKNKNGGLSCNRLAEFIEVAQTLKNDQSLKVCVDCGSPAKHDPCLHRAICTRESCKLDFCTRCSCKYHFSKSCLMSKPGSYRIPSEPLPGSKKSKQNLRRL.

Residues 1 to 21 (MMCGFASNQSPKKLSSKKSSA) form a disordered region. The span at 7–20 (SNQSPKKLSSKKSS) shows a compositional bias: low complexity. The F-box domain maps to 197 to 244 (AELFHRDFKHLLTKILRHLSAMDLINVISVSTTWRKLLQKDNWAYNAY). A ZBR-type zinc finger spans residues 319–367 (SLKVCVDCGSPAKHDPCLHRAICTRESCKLDFCTRCSCKYHFSKSCLMS). Zn(2+) contacts are provided by Cys323, Cys326, Cys341, Cys346, Cys351, Cys354, His359, and Cys364.

Part of a SCF (SKP1-cullin-F-box) protein ligase complex. Interacts with btrc. Interacts with skp1. Interacts with cdc20. Interacts with pin1; stabilizes fbxo5 by preventing its association with btrc in an isomerization-dependent pathway; this interaction is present during G2 phase and prevents fbxo5 degradation. Interacts with plk1. Proteolysed; proteolysis is induced by both cyclin B-cdk1 and cyclin A-cdk1/2 complex through probable phosphorylation. Proteolysis is inhibited by pin1 during G2.

It localises to the nucleus. The protein localises to the cytoplasm. The protein resides in the cytoskeleton. It is found in the spindle. Its subcellular location is the microtubule organizing center. It localises to the centrosome. Its pathway is protein modification; protein ubiquitination. Regulates progression through early mitosis by inhibiting the anaphase promoting complex/cyclosome (APC). Binds to the APC activator cdc20 to prevent APC activation. Can also bind directly to the APC to inhibit substrate-binding. Required to arrest unfertilized eggs at metaphase of meiosis II, by preventing their release from metaphase of meiosis II, through inhibition of APC-dependent cyclin B destruction leading to stabilization of cyclin B-cdk1 complex activity. The polypeptide is F-box only protein 5-A (fbxo5-a) (Xenopus laevis (African clawed frog)).